The primary structure comprises 843 residues: Elongation factor 2 (843 aa).

Residues 17–253 enclose the tr-type G domain; it reads HNIRNMSVIA…LWGENFFDPA (237 aa). GTP is bound at residue 26-33; it reads AHVDHGKS. Phosphothreonine occurs at positions 57 and 59. Residue 158–161 coordinates GTP; that stretch reads NKMD. His-700 carries the post-translational modification Diphthamide.

This sequence belongs to the TRAFAC class translation factor GTPase superfamily. Classic translation factor GTPase family. EF-G/EF-2 subfamily. In terms of processing, phosphorylation by EF-2 kinase completely inactivates EF-2.

Its subcellular location is the cytoplasm. The catalysed reaction is GTP + H2O = GDP + phosphate + H(+). Its function is as follows. Catalyzes the GTP-dependent ribosomal translocation step during translation elongation. During this step, the ribosome changes from the pre-translocational (PRE) to the post-translocational (POST) state as the newly formed A-site-bound peptidyl-tRNA and P-site-bound deacylated tRNA move to the P and E sites, respectively. Catalyzes the coordinated movement of the two tRNA molecules, the mRNA and conformational changes in the ribosome. The protein is Elongation factor 2 of Beta vulgaris (Sugar beet).